The following is a 191-amino-acid chain: Thioredoxin F-type, chloroplastic (191 aa).

The region spanning 68–190 (KASLETAVGA…LVAAIEAARS (123 aa)) is the Thioredoxin domain. Catalysis depends on nucleophile residues Cys-115 and Cys-118. A disulfide bridge connects residues Cys-115 and Cys-118.

The protein belongs to the thioredoxin family. Plant F-type subfamily. As to quaternary structure, forms a complex with heterodimeric ferredoxin-thioredoxin reductase (FTR) and ferredoxin.

It is found in the plastid. The protein localises to the chloroplast. Its function is as follows. Participates in various redox reactions through the reversible oxidation of the active center dithiol to a disulfide. The F form is known to activate a number of enzymes of the photosynthetic carbon cycle. The sequence is that of Thioredoxin F-type, chloroplastic from Mesembryanthemum crystallinum (Common ice plant).